The following is a 126-amino-acid chain: Aspartate 1-decarboxylase (126 aa).

Residue Ser25 is the Schiff-base intermediate with substrate; via pyruvic acid of the active site. Ser25 carries the post-translational modification Pyruvic acid (Ser). A substrate-binding site is contributed by Thr57. Tyr58 serves as the catalytic Proton donor. Position 73–75 (73–75 (GAA)) interacts with substrate.

This sequence belongs to the PanD family. In terms of assembly, heterooctamer of four alpha and four beta subunits. Pyruvate is required as a cofactor. In terms of processing, is synthesized initially as an inactive proenzyme, which is activated by self-cleavage at a specific serine bond to produce a beta-subunit with a hydroxyl group at its C-terminus and an alpha-subunit with a pyruvoyl group at its N-terminus.

It is found in the cytoplasm. It carries out the reaction L-aspartate + H(+) = beta-alanine + CO2. Its pathway is cofactor biosynthesis; (R)-pantothenate biosynthesis; beta-alanine from L-aspartate: step 1/1. Catalyzes the pyruvoyl-dependent decarboxylation of aspartate to produce beta-alanine. The sequence is that of Aspartate 1-decarboxylase from Yersinia pestis bv. Antiqua (strain Antiqua).